Here is a 1888-residue protein sequence, read N- to C-terminus: Zinc finger protein 106 (1888 aa).

A C2H2-type 1; atypical zinc finger spans residues 5–29; it reads RKCILCHIVYGSKKEMDEHMRSMLH. The segment at 43 to 67 adopts a C2H2-type 2; atypical zinc-finger fold; the sequence is HECRVCRVTEVGLSAYAKHISGQLH. The tract at residues 68-187 is disordered; that stretch reads KDNVDAQERE…GPRGSSVWHK (120 aa). Positions 75 to 89 are enriched in acidic residues; the sequence is EREDDGKEEEEEEYF. Composition is skewed to basic and acidic residues over residues 90–108, 118–138, and 150–160; these read DKEL…RQDE, SDDR…DRES, and PQRDWKWEKDG. Residue Lys91 forms a Glycyl lysine isopeptide (Lys-Gly) (interchain with G-Cter in SUMO2) linkage. Lys155 is covalently cross-linked (Glycyl lysine isopeptide (Lys-Gly) (interchain with G-Cter in SUMO2)). Residues 161–175 show a composition bias toward polar residues; the sequence is FNSTRKNSFPHSLRN. Glycyl lysine isopeptide (Lys-Gly) (interchain with G-Cter in SUMO2) cross-links involve residues Lys265 and Lys309. Disordered stretches follow at residues 287-326 and 338-362; these read KKSN…DTFP and RESQ…TKAR. Residues 296–311 show a composition bias toward basic and acidic residues; that stretch reads SQERCKWQRQDRDKAA. Residues 342–357 show a composition bias toward polar residues; the sequence is TTKQTDTAASKINGKN. Residues Lys375, Lys384, Lys390, Lys435, Lys469, and Lys479 each participate in a glycyl lysine isopeptide (Lys-Gly) (interchain with G-Cter in SUMO2) cross-link. Disordered regions lie at residues 410-437 and 453-525; these read KPVD…HKAI and TEQS…TSKS. Over residues 481 to 491 the composition is skewed to basic residues; it reads GPHKQNLKNRS. A compositionally biased stretch (polar residues) spans 507–525; sequence LLNTSTLEGSHGSSYTSKS. Residues Lys524, Lys534, and Lys544 each participate in a glycyl lysine isopeptide (Lys-Gly) (interchain with G-Cter in SUMO2) cross-link. Residues 537–617 are disordered; it reads KTVSGTQKEP…SAMTSDAENH (81 aa). Residues 551–572 are compositionally biased toward polar residues; the sequence is NNTSQKAQDTVLQCPKTLQNPL. Lys577 is covalently cross-linked (Glycyl lysine isopeptide (Lys-Gly) (interchain with G-Cter in SUMO2)). Basic and acidic residues predominate over residues 577 to 593; that stretch reads KRMENDAKESSVEESAK. The span at 597–613 shows a compositional bias: polar residues; the sequence is SIESQPHSAGNSAMTSD. Residue Lys620 forms a Glycyl lysine isopeptide (Lys-Gly) (interchain with G-Cter in SUMO2) linkage. Residues 635–661 are disordered; the sequence is STHTVDKEQGSQIPGTPENLSTSPRNS. Residues 644–661 show a composition bias toward polar residues; sequence GSQIPGTPENLSTSPRNS. Phosphoserine occurs at positions 657 and 677. Glycyl lysine isopeptide (Lys-Gly) (interchain with G-Cter in SUMO2) cross-links involve residues Lys687, Lys700, Lys721, Lys738, Lys758, Lys792, and Lys824. A disordered region spans residues 696–728; sequence NNLVKSDGPFETESFEDTSLDTELQKPDLNNQP. Ser876, Ser878, Ser881, and Ser909 each carry phosphoserine. A disordered region spans residues 894-920; the sequence is TGEGTGKENEAQQSPSPNTALSAAQSQ. The segment covering 904-920 has biased composition (polar residues); it reads AQQSPSPNTALSAAQSQ. A Glycyl lysine isopeptide (Lys-Gly) (interchain with G-Cter in SUMO2) cross-link involves residue Lys921. At Ser953 the chain carries Phosphoserine. Positions 968 to 986 are enriched in basic and acidic residues; the sequence is ARDLHSQERSTPLSERHAQ. Disordered stretches follow at residues 968–1064, 1281–1461, and 1468–1487; these read ARDL…ERSQ, EQGN…SKKD, and QNPI…TSEL. Low complexity predominate over residues 992 to 1008; the sequence is GNSLSSNASSGHAVSSL. The segment covering 1013 to 1022 has biased composition (polar residues); that stretch reads TDSSCTSGAE. A Phosphothreonine modification is found at Thr1036. Residues Ser1040, Ser1041, and Ser1046 each carry the phosphoserine modification. Basic residues predominate over residues 1050-1060; sequence KNKRRKIKGKK. The span at 1281-1296 shows a compositional bias: polar residues; sequence EQGNSRSKGNSPSCQS. Phosphoserine is present on residues Ser1291, Ser1293, and Ser1296. Lys1310 participates in a covalent cross-link: Glycyl lysine isopeptide (Lys-Gly) (interchain with G-Cter in SUMO2). Low complexity predominate over residues 1312 to 1321; that stretch reads SSGSEACSSS. Phosphoserine is present on Ser1313. Lys1335 participates in a covalent cross-link: Glycyl lysine isopeptide (Lys-Gly) (interchain with G-Cter in SUMO2). Residues 1338-1354 are compositionally biased toward polar residues; the sequence is QSPADQPEQQAESTLAS. Ser1339 bears the Phosphoserine mark. Basic residues predominate over residues 1360–1373; the sequence is SKKKKKLRKKKTLR. Ser1381 is modified (phosphoserine). At Thr1383 the chain carries Phosphothreonine. Residues Lys1391, Lys1403, Lys1406, and Lys1460 each participate in a glycyl lysine isopeptide (Lys-Gly) (interchain with G-Cter in SUMO2) cross-link. Basic and acidic residues predominate over residues 1450–1461; the sequence is GDEKPDSPSKKD. Over residues 1470–1487 the composition is skewed to polar residues; that stretch reads PIETSRSGCDEVSSTSEL. The residue at position 1474 (Ser1474) is a Phosphoserine. Residues Lys1492 and Lys1509 each participate in a glycyl lysine isopeptide (Lys-Gly) (interchain with G-Cter in SUMO2) cross-link. The tract at residues 1509-1531 is disordered; that stretch reads KASKHSSEISSEPGDDEEPTEGS. 6 WD repeats span residues 1534–1573, 1575–1618, 1659–1700, 1703–1742, 1743–1780, and 1783–1820; these read GHQA…GVFE, HTSK…EQLQ, HGPR…LLRT, GHSK…RIYK, GHNH…RLQV, and GHKD…NYRC. Lys1590 is covalently cross-linked (Glycyl lysine isopeptide (Lys-Gly) (interchain with G-Cter in SUMO2)). Lys1742 is covalently cross-linked (Glycyl lysine isopeptide (Lys-Gly) (interchain with G-Cter in SUMO2)). A C2H2-type 3; atypical zinc finger spans residues 1818–1843; sequence YRCWWYGCTLIFGVVDHLKQHLLTDH. Lys1869 is covalently cross-linked (Glycyl lysine isopeptide (Lys-Gly) (interchain with G-Cter in SUMO2)).

As to quaternary structure, interacts with KNOP1. Interacts with TARDBP and NUP107. Interacts (via N-terminus) with RBM39. Interacts with the SH3 domains of FYN and GRB2. In terms of processing, phosphorylated by FYN in vitro. As to expression, widely expressed, with strongest expression in skeletal muscle, heart and brain (at protein level). Detected in spinal cord motor neurons.

The protein resides in the nucleus. The protein localises to the nucleolus. It localises to the nucleus speckle. Its function is as follows. RNA-binding protein. Specifically binds to 5'-GGGGCC-3' sequence repeats in RNA. Essential for maintenance of peripheral motor neuron and skeletal muscle function. Required for normal expression and/or alternative splicing of a number of genes in spinal cord and skeletal muscle, including the neurite outgrowth inhibitor RTN4. Also contributes to normal mitochondrial respiratory function in motor neurons, via an unknown mechanism. The polypeptide is Zinc finger protein 106 (Znf106) (Mus musculus (Mouse)).